Here is a 666-residue protein sequence, read N- to C-terminus: LEAF RUST 10 DISEASE-RESISTANCE LOCUS RECEPTOR-LIKE PROTEIN KINASE-like 2.5 (666 aa).

A signal peptide spans 1–30; the sequence is MINFSLSLTKSMSYSFIWMLFVIHISCVLS. The Extracellular portion of the chain corresponds to 31-275; that stretch reads ADGNHILCSP…PTRNKVILKL (245 aa). N-linked (GlcNAc...) asparagine glycans are attached at residues asparagine 119, asparagine 141, asparagine 171, and asparagine 198. The chain crosses the membrane as a helical span at residues 276–296; the sequence is FFIVIYVLGIGAASFAMMGVI. Topologically, residues 297-666 are cytoplasmic; it reads LVVTCLNCLI…YTEICSINVA (370 aa). Residues 348 to 636 enclose the Protein kinase domain; it reads KSFAEVIGKG…ALEVPPRPVL (289 aa). Residues 354–362 and lysine 376 each bind ATP; that span reads IGKGGFGTV. Tyrosine 420 is modified (phosphotyrosine). Aspartate 471 functions as the Proton acceptor in the catalytic mechanism. Phosphothreonine occurs at positions 508 and 511.

This sequence belongs to the protein kinase superfamily. Ser/Thr protein kinase family.

It is found in the membrane. The enzyme catalyses L-seryl-[protein] + ATP = O-phospho-L-seryl-[protein] + ADP + H(+). It carries out the reaction L-threonyl-[protein] + ATP = O-phospho-L-threonyl-[protein] + ADP + H(+). This chain is LEAF RUST 10 DISEASE-RESISTANCE LOCUS RECEPTOR-LIKE PROTEIN KINASE-like 2.5, found in Arabidopsis thaliana (Mouse-ear cress).